The primary structure comprises 346 residues: PPE family protein PPE17 (346 aa).

The segment at Phe6–Ala159 is PPE.

The protein belongs to the mycobacterial PPE family. As to quaternary structure, interacts with LRR motifs 15-20 of host Toll-like receptor 2 (TLR2).

It is found in the secreted. The protein localises to the cell wall. It localises to the cell surface. Induces pro-inflammatory responses. Induces host TLR1/2 heterodimerization, which causes an increased recruitment of IRAK1, MYD88, and protein kinase C epsilon (PRKCE) to the downstream TLR-signaling complex that translocates PRKCE into the nucleus in an IRAK1-dependent manner. PRKCE-mediated phosphorylation allowed the nuclear IRAK3 to be exported to the cytoplasm, leading to increased activation of ERK1/2, stabilization of MAPK phosphatase 1 (MKP1), and induction of TNF-alpha with concomitant down-regulation of MAP kinase p38. Functionally, during M.tuberculosis and HIV-1 co-infection, can stimulate transcription from the long terminal repeat (LTR) of HIV-1 in monocyte/macrophage cells. Interaction with human TLR2 activates the NF-kappa-B transcription factor, which binds to the promoter region of the HIV-1 and induces HIV-1 gene expression. The protein is PPE family protein PPE17 (PPE17) of Mycobacterium tuberculosis (strain ATCC 25618 / H37Rv).